Consider the following 398-residue polypeptide: WW domain-binding protein 4 (398 aa).

The Matrin-type zinc-finger motif lies at 11-42; it reads KFCDYCKCWIADNRPSIDFHERGKNHKENVAK. Disordered stretches follow at residues 84-182, 200-274, 300-350, and 379-398; these read GIKP…SVWV, VSTW…KLSP, LASK…PPVL, and KKRE…LDDQ. Positions 92–103 are enriched in polar residues; sequence PSSTLNKTQSIT. Residues 112–125 are compositionally biased toward basic residues; sequence KKEKKEKKEKKKKT. A compositionally biased stretch (basic and acidic residues) spans 126–139; that stretch reads REGTSESPKTEPKE. 2 consecutive WW domains span residues 134-167 and 175-208; these read KTEP…KPKG and SHTG…KPDG. Polar residues predominate over residues 169–178; that stretch reads QGNSKTSHTG. Residues 221–232 are compositionally biased toward basic and acidic residues; that stretch reads KHSEEADSRASE. Residues 233-242 show a composition bias toward acidic residues; that stretch reads SDSEQEDSES. Positions 305-316 are enriched in basic and acidic residues; sequence ASSDESKTDTYG. A compositionally biased stretch (acidic residues) spans 324–333; sequence EEEEEPDEKV.

In terms of assembly, component of the spliceosome B complex. Associated with U2 snRNPs. Binds splicing factors SNRPB, SNRPC and SF1.

The protein resides in the nucleus. Its subcellular location is the nucleus speckle. Its function is as follows. Involved in pre-mRNA splicing as a component of the spliceosome. May play a role in cross-intron bridging of U1 and U2 snRNPs in the mammalian A complex. The sequence is that of WW domain-binding protein 4 (WBP4) from Gallus gallus (Chicken).